Consider the following 361-residue polypeptide: Peptide chain release factor 1 (361 aa).

N5-methylglutamine is present on glutamine 237. A compositionally biased stretch (basic and acidic residues) spans 287–297; sequence KQQKEQSDTRK. Residues 287–313 form a disordered region; it reads KQQKEQSDTRKSLVGSGDRSERIRTYN.

This sequence belongs to the prokaryotic/mitochondrial release factor family. Post-translationally, methylated by PrmC. Methylation increases the termination efficiency of RF1.

It is found in the cytoplasm. Functionally, peptide chain release factor 1 directs the termination of translation in response to the peptide chain termination codons UAG and UAA. The polypeptide is Peptide chain release factor 1 (Francisella tularensis subsp. novicida (strain U112)).